Reading from the N-terminus, the 582-residue chain is Zinc finger protein 614 (582 aa).

The KRAB domain occupies 8–79 (LTLEDVAVEF…VAKIQNKNCP (72 aa)). Residues 202-224 (HACIECEQTFLRKSQLIYHENIH) form a C2H2-type 1 zinc finger. Residues 254-278 (KICIPNEYRKGSTVNSRLIAHQQTH) form a C2H2-type 2; degenerate zinc finger. C2H2-type zinc fingers lie at residues 284 to 306 (YMCS…QRTH), 312 to 334 (YVCN…QRTH), 340 to 362 (YICS…QRTH), 368 to 390 (YICS…QRSH), 396 to 418 (YICS…QRTH), 424 to 446 (YICN…QRTH), 452 to 474 (YECN…ERCH), 480 to 502 (FVCT…QRIH), 508 to 530 (YECN…QRTH), and 536 to 558 (YGCS…KKMH).

It belongs to the krueppel C2H2-type zinc-finger protein family.

The protein localises to the nucleus. Its function is as follows. May be involved in transcriptional regulation. In Macaca fascicularis (Crab-eating macaque), this protein is Zinc finger protein 614 (ZNF614).